A 327-amino-acid polypeptide reads, in one-letter code: Tryptophan--tRNA ligase (327 aa).

ATP is bound by residues 9 to 11 (RPT) and 17 to 18 (GN). The 'HIGH' region signature appears at 10 to 18 (PTGNLHLGN). D133 lines the L-tryptophan pocket. Residues 145 to 147 (GKD), V186, and 194 to 198 (KMGKS) each bind ATP. A 'KMSKS' region motif is present at residues 194 to 198 (KMGKS).

It belongs to the class-I aminoacyl-tRNA synthetase family. As to quaternary structure, homodimer.

Its subcellular location is the cytoplasm. It carries out the reaction tRNA(Trp) + L-tryptophan + ATP = L-tryptophyl-tRNA(Trp) + AMP + diphosphate + H(+). Its function is as follows. Catalyzes the attachment of tryptophan to tRNA(Trp). The protein is Tryptophan--tRNA ligase of Porphyromonas gingivalis (strain ATCC BAA-308 / W83).